The chain runs to 615 residues: Nuclear receptor subfamily 1 group D member 1 (615 aa).

Polar residues predominate over residues Met1 to Gly12. Positions Met1–Thr70 are required for phosphorylation by CSNK1E and cytoplasmic localization. The interval Met1 to Thr120 is disordered. A modulating region spans residues Met1 to Met129. A compositionally biased stretch (low complexity) spans Ile14–Ser34. Residues Asp35–Cys48 are compositionally biased toward polar residues. Positions Pro49–Thr285 are crucial for activation of GJA1. A phosphoserine; by GSK3-beta mark is found at Ser55 and Ser59. Over residues Pro72 to Ser103 the composition is skewed to low complexity. Residues Val130–Phe206 constitute a DNA-binding region (nuclear receptor). 2 NR C4-type zinc fingers span residues Cys133–Cys153 and Cys170–Cys194. Residues Lys192 and Lys193 each carry the N6-acetyllysine; by KAT5 modification. Disordered regions lie at residues Leu235–Glu287, Pro312–Cys337, and Asn357–Asn385. The segment covering Pro253–Thr262 has biased composition (pro residues). Thr275 carries the phosphothreonine; by CDK1 modification. The NR LBD domain occupies Thr285–Gln615. Lys401 carries the N6-acetyllysine modification. A heme-binding site is contributed by Cys419. At Lys592 the chain carries N6-acetyllysine. His603 is a heme binding site.

The protein belongs to the nuclear hormone receptor family. NR1 subfamily. Binds DNA as a monomer or a homodimer. Interacts with C1D, NR2E3, SP1 and ZNHIT1. Interacts with OPHN1 (via C-terminus). Interacts with PER2; the interaction associates PER2 to BMAL1 promoter region. Interacts with CRY1. Interacts with CCAR2. Interacts with SIAH2. Interacts with FBXW7 and CDK1. Interacts with HUWE1. Interacts with NR0B2. Interacts with NFIL3. Interacts (via domain NR LBD) with HSP90AA1 and HSP90AB1. Post-translationally, ubiquitinated, leading to its proteasomal degradation. Ubiquitinated by the SCF(FBXW7) complex when phosphorylated by CDK1 leading to its proteasomal degradation. Ubiquitinated by SIAH2; leading to its proteasomal degradation. Rapidly ubiquitinated in response to inflammatory triggers and sumoylation is a prerequisite to its ubiquitination. In terms of processing, sumoylated by UBE2I, desumoylated by SENP1, and sumoylation is a prerequisite to its ubiquitination. Phosphorylated by CSNK1E; phosphorylation enhances its cytoplasmic localization. Post-translationally, undergoes lysosome-mediated degradation in a time-dependent manner in the liver.

It is found in the nucleus. The protein resides in the cytoplasm. It localises to the cell projection. Its subcellular location is the dendrite. The protein localises to the dendritic spine. In terms of biological role, transcriptional repressor which coordinates circadian rhythm and metabolic pathways in a heme-dependent manner. Integral component of the complex transcription machinery that governs circadian rhythmicity and forms a critical negative limb of the circadian clock by directly repressing the expression of core clock components BMAL1, CLOCK and CRY1. Also regulates genes involved in metabolic functions, including lipid and bile acid metabolism, adipogenesis, gluconeogenesis and the macrophage inflammatory response. Acts as a receptor for heme which stimulates its interaction with the NCOR1/HDAC3 corepressor complex, enhancing transcriptional repression. Recognizes two classes of DNA response elements within the promoter of its target genes and can bind to DNA as either monomers or homodimers, depending on the nature of the response element. Binds as a monomer to a response element composed of the consensus half-site motif 5'-[A/G]GGTCA-3' preceded by an A/T-rich 5' sequence (RevRE), or as a homodimer to a direct repeat of the core motif spaced by two nucleotides (RevDR-2). Acts as a potent competitive repressor of ROR alpha (RORA) function and regulates the levels of its ligand heme by repressing the expression of PPARGC1A, a potent inducer of heme synthesis. Regulates lipid metabolism by repressing the expression of APOC3 and by influencing the activity of sterol response element binding proteins (SREBPs); represses INSIG2 which interferes with the proteolytic activation of SREBPs which in turn govern the rhythmic expression of enzymes with key functions in sterol and fatty acid synthesis. Regulates gluconeogenesis via repression of G6PC1 and PEPCK and adipocyte differentiation via repression of PPARG. Regulates glucagon release in pancreatic alpha-cells via the AMPK-NAMPT-SIRT1 pathway and the proliferation, glucose-induced insulin secretion and expression of key lipogenic genes in pancreatic-beta cells. Positively regulates bile acid synthesis by increasing hepatic expression of CYP7A1 via repression of NR0B2 and NFIL3 which are negative regulators of CYP7A1. Modulates skeletal muscle oxidative capacity by regulating mitochondrial biogenesis and autophagy; controls mitochondrial biogenesis and respiration by interfering with the STK11-PRKAA1/2-SIRT1-PPARGC1A signaling pathway. Represses the expression of SERPINE1/PAI1, an important modulator of cardiovascular disease and the expression of inflammatory cytokines and chemokines in macrophages. Represses gene expression at a distance in macrophages by inhibiting the transcription of enhancer-derived RNAs (eRNAs). Plays a role in the circadian regulation of body temperature and negatively regulates thermogenic transcriptional programs in brown adipose tissue (BAT); imposes a circadian oscillation in BAT activity, increasing body temperature when awake and depressing thermogenesis during sleep. In concert with NR2E3, regulates transcriptional networks critical for photoreceptor development and function. In addition to its activity as a repressor, can also act as a transcriptional activator. In the ovarian granulosa cells acts as a transcriptional activator of STAR which plays a role in steroid biosynthesis. In collaboration with SP1, activates GJA1 transcription in a heme-independent manner. Represses the transcription of CYP2B10, CYP4A10 and CYP4A14. Represses the transcription of CES2. Represses and regulates the circadian expression of TSHB in a NCOR1-dependent manner. Negatively regulates the protein stability of NR3C1 and influences the time-dependent subcellular distribution of NR3C1, thereby affecting its transcriptional regulatory activity. Plays a critical role in the circadian control of neutrophilic inflammation in the lung; under resting, non-stress conditions, acts as a rhythmic repressor to limit inflammatory activity whereas in the presence of inflammatory triggers undergoes ubiquitin-mediated degradation thereby relieving inhibition of the inflammatory response. Plays a key role in the circadian regulation of microglial activation and neuroinflammation; suppresses microglial activation through the NF-kappaB pathway in the central nervous system. Plays a role in the regulation of the diurnal rhythms of lipid and protein metabolism in the skeletal muscle via transcriptional repression of genes controlling lipid and amino acid metabolism in the muscle. The chain is Nuclear receptor subfamily 1 group D member 1 (Nr1d1) from Rattus norvegicus (Rat).